A 309-amino-acid polypeptide reads, in one-letter code: Mitochondrial brown fat uncoupling protein 1 (309 aa).

Residues 2–10 (VGHTESDVP) lie on the Mitochondrial intermembrane side of the membrane. Residues 11–32 (PTMAVKIFSAGVAACVADIITF) traverse the membrane as a helical segment. Solcar repeat units lie at residues 11-106 (PTMA…VQEF), 113-203 (ASLG…MKEA), and 212-297 (DDVP…LKQE). At 33-77 (PLDTAKVRLQVGSAIQGECLISSAIRYKGVLGTIITLAKTEGPVK) the chain is on the mitochondrial matrix side. Residue Lys60 participates in fatty acid 16:0 binding. Residues 78–100 (LYSGLPAGLQRQISFASLRIGLY) form a helical membrane-spanning segment. Over 101 to 118 (DTVQEFFTTGKEASLGSK) the chain is Mitochondrial intermembrane. Residues 119 to 135 (ISAGLMTGGVAVFIGQP) form a helical membrane-spanning segment. Over 136-180 (TEVVKVRLQAQSHLHGPKPRYTGTYNAYRIIATTEGLTGLWKGTT) the chain is Mitochondrial matrix. A helical membrane pass occupies residues 181 to 197 (PNLTRNVIINCTELVTY). At 198 to 214 (DLMKEALVKNKLLADDV) the chain is on the mitochondrial intermembrane side. A helical transmembrane segment spans residues 215 to 234 (PCHFVSAVVAGFCTTVLSSP). The Mitochondrial matrix portion of the chain corresponds to 235 to 268 (VDVVKTRFVNSSPGQYTSVPNCAMMMLTREGPSA). Cys256 carries the post-translational modification Cysteine sulfenic acid (-SOH). Residues 269 to 291 (FFKGFVPSFLRLGSWNIIMFVCF) form a helical membrane-spanning segment. Residue Lys271 coordinates fatty acid 16:0. Residues 292 to 309 (EQLKQELMKSRHTMDCAT) lie on the Mitochondrial intermembrane side of the membrane.

The protein belongs to the mitochondrial carrier (TC 2.A.29) family. As to quaternary structure, most probably functions as a monomer. Binds one purine nucleotide per monomer. However, has also been suggested to function as a homodimer or a homotetramer. Tightly associates with cardiolipin in the mitochondrion inner membrane; may stabilize and regulate its activity. In terms of processing, may undergo sulfenylation upon cold exposure. May increase the sensitivity of UCP1 thermogenic function to the activation by noradrenaline probably through structural effects. May undergo ubiquitin-mediated proteasomal degradation.

It is found in the mitochondrion inner membrane. The catalysed reaction is H(+)(in) = H(+)(out). Has no constitutive proton transporter activity and has to be activated by long-chain fatty acids/LCFAs. Inhibited by purine nucleotides. Both purine nucleotides and LCFAs bind the cytosolic side of the transporter and directly compete to activate or inhibit it. Activated by noradrenaline and reactive oxygen species. Despite lacking canonical translational encoding for selenocysteine, a small pool of the protein has been observed to selectively incorporate selenocysteine at 'Cys-256'. Selenocysteine-modified protein is highly sensitive to redox modification and may constitute a pool of protein highly sensitive to activation by elevated levels of reactive oxygen species (ROS). Mitochondrial protein responsible for thermogenic respiration, a specialized capacity of brown adipose tissue and beige fat that participates in non-shivering adaptive thermogenesis to temperature and diet variations and more generally to the regulation of energy balance. Functions as a long-chain fatty acid/LCFA and proton symporter, simultaneously transporting one LCFA and one proton through the inner mitochondrial membrane. However, LCFAs remaining associated with the transporter via their hydrophobic tails, it results in an apparent transport of protons activated by LCFAs. Thereby, dissipates the mitochondrial proton gradient and converts the energy of substrate oxydation into heat instead of ATP. Regulates the production of reactive oxygen species/ROS by mitochondria. The sequence is that of Mitochondrial brown fat uncoupling protein 1 from Bos taurus (Bovine).